Here is a 664-residue protein sequence, read N- to C-terminus: Ent-copalyl diphosphate synthase 5 (664 aa).

K101 is a substrate binding site. Positions 233 and 235 each coordinate Mg(2+). The DXDD motif motif lies at 233–236 (DIDD). Residue K320 coordinates substrate.

Belongs to the terpene synthase family. Tpsc subfamily. Mg(2+) serves as cofactor. In terms of tissue distribution, ubiquitous expression in roots, stems, leaves and flowers.

It is found in the plastid. The protein resides in the chloroplast. The enzyme catalyses (2E,6E,10E)-geranylgeranyl diphosphate = ent-copalyl diphosphate. It functions in the pathway secondary metabolite biosynthesis; terpenoid biosynthesis. Involved in the biosynthesis of ent-kaurene diterpenoids natural products such as oridonin, miltiradiene, eriocalyxin B and nezukol, known to exhibit antitumor, anti-inflammatory and antibacterial activities. Catalyzes the conversion of (2E,6E,10E)-geranylgeranyl diphosphate (GGPP) to ent-copalyl diphosphate (ent-CPP). In Isodon rubescens (Rabdosia rubescens), this protein is Ent-copalyl diphosphate synthase 5.